A 180-amino-acid polypeptide reads, in one-letter code: MAEVDLCALFFNLRVKDVTSSDELKKHILSASDERNPLTEPGENQSMDVDEEGGTRDPGILYLYVDCPTMMQCFYGTSFPYNSRHGALLTNLPPYQKDVSLSEVSRGLRQASGFFGYEDPIRSAYFAALSFPGHVAKLDEQMELTSTNGESLTFDLYASDQLRLEPGAWVRHGECKFGMN.

A disordered region spans residues 31–54 (ASDERNPLTEPGENQSMDVDEEGG).

Its function is as follows. Hydrolyzes cytokinin glucosides thus liberating free cytokinins. The protein is Cytokinin-beta-glucosidase (ROLC) of Nicotiana glauca (Glaucous tobacco).